The sequence spans 284 residues: SF-assemblin (284 aa).

The tract at residues 1 to 30 (PTPSPEARVASRPFLDSPLPGSPRSGSPTG) is disordered. Residues 1 to 38 (PTPSPEARVASRPFLDSPLPGSPRSGSPTGYITATKAI) are nonhelical region. Low complexity predominate over residues 17–30 (SPLPGSPRSGSPTG). Residues 39–284 (SAGKLEHVAE…QDGLRIVNNS (246 aa)) form a rod region. Coiled-coil stretches lie at residues 56 to 102 (EIEL…QIQV) and 239 to 268 (LDEINNLKSAVQMEREERISEDDEIVQAVN).

The protein belongs to the SF-assemblin family. Post-translationally, consists of at least four isoforms including two phosphorylated.

It is found in the cytoplasm. It localises to the cytoskeleton. Major component of the striated microtubule-associated fibers (SMAFs; system-I-fibers). The polypeptide is SF-assemblin (Spermatozopsis similis (Green alga)).